Here is a 704-residue protein sequence, read N- to C-terminus: Translational regulator orb2 (704 aa).

Residues 1–64 (MDSLKLPKAN…PPGLGSSTPI (64 aa)) form a disordered region. The segment at 1 to 87 (MDSLKLPKAN…ILQSFHHSKH (87 aa)) is gln/His-rich. The span at 9–42 (ANSATSSASGSNSNLSGSTSASASAATSPTSSGT) shows a compositional bias: low complexity. A phosphoserine mark is found at Ser74, Ser88, and Ser100. 3 disordered regions span residues 82–106 (FHHSKHSPSGGASGGGDASPTSNLL), 166–266 (LPNL…GVSP), and 417–438 (SPSRLSPHSPHSPIQGGNGGNV). The tract at residues 163-240 (CGGLPNLNLN…PSSPGGGGGG (78 aa)) is gln/His-rich. Low complexity-rich tracts occupy residues 176-205 (QLHQQQHQQQHQQHQQHQQQQQLHQHQQQL), 218-233 (QQQQLRESGGSHSPSS), and 417-429 (SPSRLSPHSPHSP). Ser425 and Ser428 each carry phosphoserine. 2 consecutive RRM domains span residues 447–538 (RKVF…PWRL) and 555–637 (KTVF…PYVL).

In terms of assembly, monomer. Upon neuronal stimulation, forms stable amyloid-like oligomers composed of isoform A and isoform B which are required for formation of persistent long-term memory. Isoform A is critical for oligomer formation. Phe-5 of isoform A is required for amyloid-like oligomerization. Rapidly forms amyloids and toxic intermediates are extremely transient. Unlike in the adult nervous system, remains monomeric in the early embryo. Interacts with the translational regulator bol. Interacts with Tob; the interaction is enhanced by neuronal stimulation, stabilizes isoform A and induces oligomerization. Post-translationally, phosphorylation regulates interaction with Tob and oligomerization. Protein phosphatase 2A keeps both Orb2 and Tob in an unphosphorylated form. Following synaptic activation, unphosphorylated Orb2 is bound and stabilized by unphosphorylated Tob. Tob recruits activated LimK which phosphorylates both Orb2 and Tob and enhances Orb2 oligomerization. As to expression, broadly expressed throughout the nervous system of embryo, larva and adult including the ventral nerve cord and brain (at protein level). In early embryos, deposited maternally and distributed uniformly throughout the embryo until the extended germband stage. By mid-embryogenesis, highest levels are found in the central and peripheral nervous systems with lower expression also detected in the ectoderm and mesoderm. In adults, high levels are present in the head and body of both sexes with higher expression in testis than ovary. In the ovary, expressed in both germ and follicle cells. In adult head, predominantly neuronal with broad expression throughout the brain and ventral ganglia including the mushroom body.

The protein resides in the perikaryon. Its subcellular location is the cell projection. It localises to the axon. The protein localises to the dendrite. It is found in the synapse. The protein resides in the cytoplasm. Its subcellular location is the perinuclear region. Functionally, RNA-binding protein involved in translational regulation and required for long-term memory. Required in mushroom body gamma neurons for long-term memory in male courtship. Binds to mRNA 3'-UTRs. In its monomeric form, acts as a translational repressor of genes involved in neuronal growth, synapse formation and protein turnover. In its amyloid-like oligomeric form, acts as a translational activator. The monomeric form reduces poly(A) tail length and destabilizes mRNA while the oligomeric form protects and elongates the poly(A) tail and stabilizes mRNA. Involved in asymmetric cell division in the central nervous system. Plays a role in synapse formation and morphology at neuromuscular junctions by modulating the translation of the tumor suppressor brat. Required for the progression of spermatogenesis through meiosis and for sperm differentiation. During sperm differentiation, required to asymmetrically localize and activate the translation of protein kinase aPKC mRNAs which is necessary for spermatid cyst polarization. Also required during spermatid cyst polarization for localization and translation of its own mRNA. In terms of biological role, required for initial memory acquisition. Following subsequent late dopaminergic pathway activation, recruits isoform B into a complex to activate translation of CaMKII which is required for long-term memory consolidation. The protein is Translational regulator orb2 of Drosophila melanogaster (Fruit fly).